Reading from the N-terminus, the 108-residue chain is MPYLKGAPMNLQEMEKNSAKAVVLLKAMANERRLQILCMLLDNELSVGELSSRLELSQSALSQHLAWLRRDGLVNTRKEAQTVFYTLSSTEVKAMIELLHRLYCQANQ.

One can recognise an HTH arsR-type domain in the interval Glu-13–Asn-107. The H-T-H motif DNA-binding region spans Val-47 to Ala-66.

In terms of biological role, up-regulates the expression of the hemolysin gene, hlyA, and may promote expression of other virulence determinants in vivo. It may have both positive and negative regulator activities. The chain is Transcriptional activator HlyU (hlyU) from Vibrio cholerae serotype O1 (strain ATCC 39315 / El Tor Inaba N16961).